Reading from the N-terminus, the 232-residue chain is Protein FAM246A (232 aa).

Disordered stretches follow at residues 1-47 (MATP…RAPG), 153-178 (LPPP…RGPT), and 191-232 (AASR…GGGD). The segment covering 19-31 (EVLRRVTGRRRDP) has biased composition (basic and acidic residues). Residues 211–220 (APVRKNHKKM) are compositionally biased toward basic residues.

Belongs to the FAM246 family.

The polypeptide is Protein FAM246A (Homo sapiens (Human)).